The sequence spans 357 residues: Cell division control protein 10 (357 aa).

One can recognise a Septin-type G domain in the interval 34–306; the sequence is RGFQFNIMVV…ETFRSKQLIA (273 aa). The G1 motif stretch occupies residues 44 to 51; sequence GRSGLGKS. Residues 44 to 51, Thr78, Gly104, 184 to 192, Gly240, and Arg255 contribute to the GTP site; these read GRSGLGKS and KSDSLTLDE. Residues 101–104 are G3 motif; the sequence is DTPG. Residues 183–186 are G4 motif; the sequence is AKSD. The segment at 310–357 is disordered; that stretch reads NASNPNRQSQLQKDQGQTSQQSNQDLKNTSGVPNAPMFQSTTGTAAAR.

Belongs to the TRAFAC class TrmE-Era-EngA-EngB-Septin-like GTPase superfamily. Septin GTPase family.

The protein localises to the bud neck. Plays a role in the cell cycle. Involved in the formation of the ring of filaments in the neck region at the mother-bud junction during mitosis. In Candida albicans (strain SC5314 / ATCC MYA-2876) (Yeast), this protein is Cell division control protein 10 (CDC10).